Reading from the N-terminus, the 465-residue chain is ATP-dependent protease ATPase subunit HslU (465 aa).

ATP-binding positions include valine 20, 62–67, aspartate 277, glutamate 343, and arginine 415; that span reads GVGKTE.

It belongs to the ClpX chaperone family. HslU subfamily. A double ring-shaped homohexamer of HslV is capped on each side by a ring-shaped HslU homohexamer. The assembly of the HslU/HslV complex is dependent on binding of ATP.

Its subcellular location is the cytoplasm. ATPase subunit of a proteasome-like degradation complex; this subunit has chaperone activity. The binding of ATP and its subsequent hydrolysis by HslU are essential for unfolding of protein substrates subsequently hydrolyzed by HslV. HslU recognizes the N-terminal part of its protein substrates and unfolds these before they are guided to HslV for hydrolysis. The sequence is that of ATP-dependent protease ATPase subunit HslU from Geobacillus kaustophilus (strain HTA426).